The primary structure comprises 389 residues: MVTVSEIRKAQRAEGPATILAIGTANPANCVEQSTYPDFYFKITNSEHKTVLKEKFQRMCDKSMIKRRYMYLTEDILKENPSLCEYMAPSLDARQDMVVVEVPRLGKEAAVKAIKEWGQPKSKITHLIFCTTSGVDMPGADYQLTKLLGLRPYVKRYMMYQQGCFAGGTVFRLAKDLAENNKNARVLVVCSEVTAVTFRGPSDTHLDSLVGQALFGDGAAALIVGSDPVPEIEKPIFEMVWTAQTIAPDSEGAIDGHLREAGLTFHLLKDVPGIVSKNIDKALVEAFKPLGISDYNSIFWIAHPGGPAILDQVEQKLALKPEKMRATREVLSEYGNMSSACVLFILDEMRKKSTQDGLNTTGEGLEWGVLFGFGPGLTIETVVLRSVAI.

C164 is an active-site residue.

Belongs to the thiolase-like superfamily. Chalcone/stilbene synthases family.

It carries out the reaction (E)-4-coumaroyl-CoA + 3 malonyl-CoA + 3 H(+) = 2',4,4',6'-tetrahydroxychalcone + 3 CO2 + 4 CoA. The protein operates within secondary metabolite biosynthesis; flavonoid biosynthesis. Functionally, the primary product of this enzyme is 4,2',4',6'-tetrahydroxychalcone (also termed naringenin-chalcone or chalcone) which can under specific conditions spontaneously isomerize into naringenin. This is Chalcone synthase 2 (CHS2) from Pisum sativum (Garden pea).